A 508-amino-acid chain; its full sequence is Methionine--tRNA ligase (508 aa).

Positions 12-22 match the 'HIGH' region motif; the sequence is YYVNDIPHIGH. The short motif at 295–299 is the 'KMSKS' region element; it reads KISKS. An ATP-binding site is contributed by K298.

Belongs to the class-I aminoacyl-tRNA synthetase family. MetG type 2B subfamily. In terms of assembly, monomer.

Its subcellular location is the cytoplasm. The enzyme catalyses tRNA(Met) + L-methionine + ATP = L-methionyl-tRNA(Met) + AMP + diphosphate. Is required not only for elongation of protein synthesis but also for the initiation of all mRNA translation through initiator tRNA(fMet) aminoacylation. The polypeptide is Methionine--tRNA ligase (Rickettsia conorii (strain ATCC VR-613 / Malish 7)).